We begin with the raw amino-acid sequence, 408 residues long: MQTLPTPTTSSNTANQSTFDTTIKRRKTRPVKVGNVTIGGGYPVVVQSMINEDTLDIDGSVAAIRRLHEIGCEIVRVTVPSIAHAVALAEIKQKLITTYQDVPIVADVHHNGMKIALEVAKHIEKVRINPGLYVFEKPNTNRTEYTQAEFEEIGEKIRETLAPLVITLRDQGKAMRIGVNHGSLAERMLFTYGDTPEGMVESALEFIRICESLDFRNIVISMKASRVPVMVAAYRLMAKRMDDLGMDYPLHLGVTEAGDGEYGRIKSTAGIATLLADGIGDTIRVSLTEAPEKEIPVCYSILQALGLRKTMVEYVACPSCGRTLFNLEEVLHKVRESTKHLTGLDIAVMGCIVNGPGEMADADYGYVGKTPGYISLYRGREEIKKVPEDKGVEELINLIKADGRWVDP.

Positions 1 to 21 (MQTLPTPTTSSNTANQSTFDT) are enriched in polar residues. Positions 1 to 26 (MQTLPTPTTSSNTANQSTFDTTIKRR) are disordered. [4Fe-4S] cluster contacts are provided by Cys317, Cys320, Cys351, and Glu358.

The protein belongs to the IspG family. Requires [4Fe-4S] cluster as cofactor.

It catalyses the reaction (2E)-4-hydroxy-3-methylbut-2-enyl diphosphate + 2 oxidized [2Fe-2S]-[ferredoxin] + H2O = 2-C-methyl-D-erythritol 2,4-cyclic diphosphate + 2 reduced [2Fe-2S]-[ferredoxin] + H(+). Its pathway is isoprenoid biosynthesis; isopentenyl diphosphate biosynthesis via DXP pathway; isopentenyl diphosphate from 1-deoxy-D-xylulose 5-phosphate: step 5/6. In terms of biological role, converts 2C-methyl-D-erythritol 2,4-cyclodiphosphate (ME-2,4cPP) into 1-hydroxy-2-methyl-2-(E)-butenyl 4-diphosphate. This is 4-hydroxy-3-methylbut-2-en-1-yl diphosphate synthase (ferredoxin) from Trichormus variabilis (strain ATCC 29413 / PCC 7937) (Anabaena variabilis).